A 524-amino-acid chain; its full sequence is Probable glycine dehydrogenase (decarboxylating) subunit 2 (524 aa).

K296 bears the N6-(pyridoxal phosphate)lysine mark.

This sequence belongs to the GcvP family. C-terminal subunit subfamily. In terms of assembly, the glycine cleavage system is composed of four proteins: P, T, L and H. In this organism, the P 'protein' is a heterodimer of two subunits. The cofactor is pyridoxal 5'-phosphate.

It catalyses the reaction N(6)-[(R)-lipoyl]-L-lysyl-[glycine-cleavage complex H protein] + glycine + H(+) = N(6)-[(R)-S(8)-aminomethyldihydrolipoyl]-L-lysyl-[glycine-cleavage complex H protein] + CO2. Its function is as follows. The glycine cleavage system catalyzes the degradation of glycine. The P protein binds the alpha-amino group of glycine through its pyridoxal phosphate cofactor; CO(2) is released and the remaining methylamine moiety is then transferred to the lipoamide cofactor of the H protein. The chain is Probable glycine dehydrogenase (decarboxylating) subunit 2 from Caulobacter vibrioides (strain ATCC 19089 / CIP 103742 / CB 15) (Caulobacter crescentus).